Reading from the N-terminus, the 56-residue chain is MAHESVWFSHPRNFGKGSRQCRVCSSHSGLIRKYDLNICRQCFRERASDIGFNKFR.

Zn(2+)-binding residues include Cys-21, Cys-24, Cys-39, and Cys-42.

Belongs to the universal ribosomal protein uS14 family. Zn(2+) is required as a cofactor.

The protein is Small ribosomal subunit protein uS14 (RPS29) of Debaryomyces hansenii (strain ATCC 36239 / CBS 767 / BCRC 21394 / JCM 1990 / NBRC 0083 / IGC 2968) (Yeast).